We begin with the raw amino-acid sequence, 133 residues long: Histone H2A.1 (133 aa).

The segment at 1 to 23 is disordered; it reads MSTTGKGGKAKGKTASSKQVSRS. S2 is modified (N-acetylserine). 5 positions are modified to N6-acetyllysine: K6, K9, K11, K13, and K18. S123 is subject to Phosphoserine. K124 participates in a covalent cross-link: Glycyl lysine isopeptide (Lys-Gly) (interchain with G-Cter in ubiquitin). At S129 the chain carries Phosphoserine.

The protein belongs to the histone H2A family. The nucleosome is a histone octamer containing two molecules each of H2A, H2B, H3 and H4 assembled in one H3-H4 heterotetramer and two H2A-H2B heterodimers. The octamer wraps approximately 147 bp of DNA. Monoubiquitination of Lys-124 gives a specific tag for epigenetic transcriptional repression. Post-translationally, acetylation occurs almost exclusively in the MAC.

It is found in the nucleus. The protein localises to the chromosome. Core component of nucleosome. Nucleosomes wrap and compact DNA into chromatin, limiting DNA accessibility to the cellular machineries which require DNA as a template. Histones thereby play a central role in transcription regulation, DNA repair, DNA replication and chromosomal stability. DNA accessibility is regulated via a complex set of post-translational modifications of histones, also called histone code, and nucleosome remodeling. The polypeptide is Histone H2A.1 (HTA2) (Tetrahymena pyriformis).